The sequence spans 271 residues: Calcium-binding protein 4 (271 aa).

Positions 1–105 (MATEHNVQLV…RSDPQQDAAQ (105 aa)) are disordered. At Ser-37 the chain carries Phosphoserine; by PKC/PRKCZ. Positions 45 to 67 (GSQKASSGDQSSSQGSEASGSSK) are enriched in low complexity. Residues 87–96 (ASHRHSHRHR) show a composition bias toward basic residues. 4 EF-hand domains span residues 125–160 (EELE…LGYM), 179–196 (GFVD…KLRE), 202–237 (LGVR…LLGE), and 239–271 (LEGT…LSTG). Asp-138, Asp-140, Asp-142, Tyr-144, and Glu-149 together coordinate Ca(2+). Ca(2+)-binding residues include Asp-215, Asp-217, Asp-219, Arg-221, Glu-226, Asp-252, Asn-254, Asp-256, Thr-258, and Glu-263.

As to quaternary structure, interacts with CACNA1F and CACNA1D (via IQ domain) in a calcium independent manner. Interacts (via N-terminus) with UNC119. Post-translationally, phosphorylated. Phosphorylation levels change with the light conditions and regulate the activity, but has no effect on calcium binding. Expressed in retina and in the inner hair cells (IHC) of the cochlea.

The protein resides in the cytoplasm. Its subcellular location is the presynapse. Its function is as follows. Involved in normal synaptic function through regulation of Ca(2+) influx and neurotransmitter release in photoreceptor synaptic terminals and in auditory transmission. Modulator of CACNA1D and CACNA1F, suppressing the calcium-dependent inactivation and shifting the activation range to more hyperpolarized voltages. This is Calcium-binding protein 4 (Cabp4) from Mus musculus (Mouse).